A 412-amino-acid polypeptide reads, in one-letter code: L-threonine:uridine-5'-aldehyde transaldolase (412 aa).

N6-(pyridoxal phosphate)lysine is present on Lys229.

The protein belongs to the SHMT family. It depends on pyridoxal 5'-phosphate as a cofactor.

The catalysed reaction is uridine-5'-aldehyde + L-threonine = (5'S,6'S)-C-glycyluridine + acetaldehyde. Its pathway is antibiotic biosynthesis. Its function is as follows. Transaldolase involved in the biosynthesis of the capuramycin-type nucleoside antibiotic A-102395. Catalyzes the condensation of L-threonine and uridine-5'-aldehyde to form 5'-C-glycyluridine (GlyU). In Amycolatopsis sp, this protein is L-threonine:uridine-5'-aldehyde transaldolase.